Reading from the N-terminus, the 445-residue chain is tRNA-2-methylthio-N(6)-dimethylallyladenosine synthase (445 aa).

The 118-residue stretch at Asn4–Lys121 folds into the MTTase N-terminal domain. 6 residues coordinate [4Fe-4S] cluster: Cys13, Cys50, Cys84, Cys158, Cys162, and Cys165. Residues Arg144 to Met376 enclose the Radical SAM core domain. The region spanning Gln379–Lys442 is the TRAM domain.

Belongs to the methylthiotransferase family. MiaB subfamily. As to quaternary structure, monomer. Requires [4Fe-4S] cluster as cofactor.

Its subcellular location is the cytoplasm. It catalyses the reaction N(6)-dimethylallyladenosine(37) in tRNA + (sulfur carrier)-SH + AH2 + 2 S-adenosyl-L-methionine = 2-methylsulfanyl-N(6)-dimethylallyladenosine(37) in tRNA + (sulfur carrier)-H + 5'-deoxyadenosine + L-methionine + A + S-adenosyl-L-homocysteine + 2 H(+). Catalyzes the methylthiolation of N6-(dimethylallyl)adenosine (i(6)A), leading to the formation of 2-methylthio-N6-(dimethylallyl)adenosine (ms(2)i(6)A) at position 37 in tRNAs that read codons beginning with uridine. The chain is tRNA-2-methylthio-N(6)-dimethylallyladenosine synthase from Buchnera aphidicola subsp. Baizongia pistaciae (strain Bp).